Consider the following 352-residue polypeptide: Quinolinate synthase (352 aa).

Residues His-48 and Ser-69 each contribute to the iminosuccinate site. Residue Cys-114 coordinates [4Fe-4S] cluster. Residues 140–142 (YAN) and Ser-157 each bind iminosuccinate. Cys-201 is a binding site for [4Fe-4S] cluster. Residues 227–229 (HPE) and Thr-244 contribute to the iminosuccinate site. Cys-298 provides a ligand contact to [4Fe-4S] cluster.

This sequence belongs to the quinolinate synthase family. Type 1 subfamily. [4Fe-4S] cluster is required as a cofactor.

The protein resides in the cytoplasm. The catalysed reaction is iminosuccinate + dihydroxyacetone phosphate = quinolinate + phosphate + 2 H2O + H(+). The protein operates within cofactor biosynthesis; NAD(+) biosynthesis; quinolinate from iminoaspartate: step 1/1. Functionally, catalyzes the condensation of iminoaspartate with dihydroxyacetone phosphate to form quinolinate. The protein is Quinolinate synthase of Pseudomonas syringae pv. syringae (strain B728a).